We begin with the raw amino-acid sequence, 137 residues long: Small ribosomal subunit protein uS12 (137 aa).

Asp-102 bears the 3-methylthioaspartic acid mark.

This sequence belongs to the universal ribosomal protein uS12 family. As to quaternary structure, part of the 30S ribosomal subunit. Contacts proteins S8 and S17. May interact with IF1 in the 30S initiation complex.

In terms of biological role, with S4 and S5 plays an important role in translational accuracy. Interacts with and stabilizes bases of the 16S rRNA that are involved in tRNA selection in the A site and with the mRNA backbone. Located at the interface of the 30S and 50S subunits, it traverses the body of the 30S subunit contacting proteins on the other side and probably holding the rRNA structure together. The combined cluster of proteins S8, S12 and S17 appears to hold together the shoulder and platform of the 30S subunit. This is Small ribosomal subunit protein uS12 from Mesoplasma florum (strain ATCC 33453 / NBRC 100688 / NCTC 11704 / L1) (Acholeplasma florum).